The following is a 258-amino-acid chain: 2-succinyl-6-hydroxy-2,4-cyclohexadiene-1-carboxylate synthase (258 aa).

It belongs to the AB hydrolase superfamily. MenH family. As to quaternary structure, monomer.

The enzyme catalyses 5-enolpyruvoyl-6-hydroxy-2-succinyl-cyclohex-3-ene-1-carboxylate = (1R,6R)-6-hydroxy-2-succinyl-cyclohexa-2,4-diene-1-carboxylate + pyruvate. Its pathway is quinol/quinone metabolism; 1,4-dihydroxy-2-naphthoate biosynthesis; 1,4-dihydroxy-2-naphthoate from chorismate: step 3/7. It participates in quinol/quinone metabolism; menaquinone biosynthesis. Functionally, catalyzes a proton abstraction reaction that results in 2,5-elimination of pyruvate from 2-succinyl-5-enolpyruvyl-6-hydroxy-3-cyclohexene-1-carboxylate (SEPHCHC) and the formation of 2-succinyl-6-hydroxy-2,4-cyclohexadiene-1-carboxylate (SHCHC). The sequence is that of 2-succinyl-6-hydroxy-2,4-cyclohexadiene-1-carboxylate synthase from Enterobacter sp. (strain 638).